Here is a 259-residue protein sequence, read N- to C-terminus: Ribonuclease HII (259 aa).

The region spanning 72 to 259 (ERIAGIDEAG…PVREALGVQS (188 aa)) is the RNase H type-2 domain. The a divalent metal cation site is built by aspartate 78, glutamate 79, and aspartate 170.

It belongs to the RNase HII family. Mn(2+) is required as a cofactor. It depends on Mg(2+) as a cofactor.

It is found in the cytoplasm. It catalyses the reaction Endonucleolytic cleavage to 5'-phosphomonoester.. Functionally, endonuclease that specifically degrades the RNA of RNA-DNA hybrids. The protein is Ribonuclease HII of Geobacillus thermodenitrificans (strain NG80-2).